The chain runs to 248 residues: 3-deoxy-manno-octulosonate cytidylyltransferase (248 aa).

Belongs to the KdsB family.

The protein resides in the cytoplasm. The enzyme catalyses 3-deoxy-alpha-D-manno-oct-2-ulosonate + CTP = CMP-3-deoxy-beta-D-manno-octulosonate + diphosphate. It functions in the pathway nucleotide-sugar biosynthesis; CMP-3-deoxy-D-manno-octulosonate biosynthesis; CMP-3-deoxy-D-manno-octulosonate from 3-deoxy-D-manno-octulosonate and CTP: step 1/1. Its pathway is bacterial outer membrane biogenesis; lipopolysaccharide biosynthesis. Activates KDO (a required 8-carbon sugar) for incorporation into bacterial lipopolysaccharide in Gram-negative bacteria. This is 3-deoxy-manno-octulosonate cytidylyltransferase from Salmonella agona (strain SL483).